The chain runs to 172 residues: Orotate phosphoribosyltransferase (172 aa).

Residues Arg-88, Lys-89, Lys-92, His-94, and 113 to 121 (EDVTTSGGS) each bind 5-phospho-alpha-D-ribose 1-diphosphate. Residues Thr-117 and Arg-145 each coordinate orotate.

The protein belongs to the purine/pyrimidine phosphoribosyltransferase family. PyrE subfamily. In terms of assembly, homodimer. It depends on Mg(2+) as a cofactor.

It carries out the reaction orotidine 5'-phosphate + diphosphate = orotate + 5-phospho-alpha-D-ribose 1-diphosphate. It functions in the pathway pyrimidine metabolism; UMP biosynthesis via de novo pathway; UMP from orotate: step 1/2. In terms of biological role, catalyzes the transfer of a ribosyl phosphate group from 5-phosphoribose 1-diphosphate to orotate, leading to the formation of orotidine monophosphate (OMP). This chain is Orotate phosphoribosyltransferase, found in Methanospirillum hungatei JF-1 (strain ATCC 27890 / DSM 864 / NBRC 100397 / JF-1).